We begin with the raw amino-acid sequence, 196 residues long: Deoxyribose-phosphate aldolase (196 aa).

The Proton donor/acceptor role is filled by aspartate 91. Residue lysine 153 is the Schiff-base intermediate with acetaldehyde of the active site. The active-site Proton donor/acceptor is lysine 182.

This sequence belongs to the DeoC/FbaB aldolase family. DeoC type 1 subfamily.

It is found in the cytoplasm. The catalysed reaction is 2-deoxy-D-ribose 5-phosphate = D-glyceraldehyde 3-phosphate + acetaldehyde. It participates in carbohydrate degradation; 2-deoxy-D-ribose 1-phosphate degradation; D-glyceraldehyde 3-phosphate and acetaldehyde from 2-deoxy-alpha-D-ribose 1-phosphate: step 2/2. Its function is as follows. Catalyzes a reversible aldol reaction between acetaldehyde and D-glyceraldehyde 3-phosphate to generate 2-deoxy-D-ribose 5-phosphate. The protein is Deoxyribose-phosphate aldolase of Mycoplasma mycoides subsp. mycoides SC (strain CCUG 32753 / NCTC 10114 / PG1).